The primary structure comprises 455 residues: Ribulose bisphosphate carboxylase large chain (455 aa).

The residue at position 5 (lysine 5) is an N6,N6,N6-trimethyllysine. Substrate-binding residues include asparagine 114 and threonine 164. Residue lysine 166 is the Proton acceptor of the active site. Lysine 168 contacts substrate. Lysine 192, aspartate 194, and glutamate 195 together coordinate Mg(2+). The residue at position 192 (lysine 192) is an N6-carboxylysine. The active-site Proton acceptor is the histidine 285. Arginine 286, histidine 318, and serine 370 together coordinate substrate.

This sequence belongs to the RuBisCO large chain family. Type I subfamily. Heterohexadecamer of 8 large chains and 8 small chains. The cofactor is Mg(2+).

The protein resides in the plastid. It localises to the chloroplast. It carries out the reaction 2 (2R)-3-phosphoglycerate + 2 H(+) = D-ribulose 1,5-bisphosphate + CO2 + H2O. It catalyses the reaction D-ribulose 1,5-bisphosphate + O2 = 2-phosphoglycolate + (2R)-3-phosphoglycerate + 2 H(+). RuBisCO catalyzes two reactions: the carboxylation of D-ribulose 1,5-bisphosphate, the primary event in carbon dioxide fixation, as well as the oxidative fragmentation of the pentose substrate in the photorespiration process. Both reactions occur simultaneously and in competition at the same active site. The sequence is that of Ribulose bisphosphate carboxylase large chain from Tamarindus indica (Tamarind).